We begin with the raw amino-acid sequence, 319 residues long: Methionyl-tRNA formyltransferase (319 aa).

116 to 119 contributes to the (6S)-5,6,7,8-tetrahydrofolate binding site; that stretch reads SLLP.

Belongs to the Fmt family.

It catalyses the reaction L-methionyl-tRNA(fMet) + (6R)-10-formyltetrahydrofolate = N-formyl-L-methionyl-tRNA(fMet) + (6S)-5,6,7,8-tetrahydrofolate + H(+). Its function is as follows. Attaches a formyl group to the free amino group of methionyl-tRNA(fMet). The formyl group appears to play a dual role in the initiator identity of N-formylmethionyl-tRNA by promoting its recognition by IF2 and preventing the misappropriation of this tRNA by the elongation apparatus. The chain is Methionyl-tRNA formyltransferase from Wigglesworthia glossinidia brevipalpis.